A 201-amino-acid chain; its full sequence is FMN-dependent NADH:quinone oxidoreductase (201 aa).

FMN contacts are provided by residues 92-95 (MWNL) and 136-139 (STGG).

Belongs to the azoreductase type 1 family. Homodimer. FMN serves as cofactor.

The catalysed reaction is 2 a quinone + NADH + H(+) = 2 a 1,4-benzosemiquinone + NAD(+). It catalyses the reaction N,N-dimethyl-1,4-phenylenediamine + anthranilate + 2 NAD(+) = 2-(4-dimethylaminophenyl)diazenylbenzoate + 2 NADH + 2 H(+). In terms of biological role, quinone reductase that provides resistance to thiol-specific stress caused by electrophilic quinones. Functionally, also exhibits azoreductase activity. Catalyzes the reductive cleavage of the azo bond in aromatic azo compounds to the corresponding amines. The chain is FMN-dependent NADH:quinone oxidoreductase from Coprothermobacter proteolyticus (strain ATCC 35245 / DSM 5265 / OCM 4 / BT).